The sequence spans 1080 residues: AP-4 complex subunit epsilon (1080 aa).

HEAT repeat units follow at residues 161 to 198 (DTIPAFLQKVLQLLNHQKPIVRKKSVTVLHRFYRLVGD), 201 to 238 (LDDDQIIDKLRQSLCDRDPSVMSASICIFLDISEKHST), 369 to 405 (QLIEQCSKNIAIFLKGKHHNLRYFGIKALASIVKVSP), 406 to 443 (KLVLPYQVEVIESLESPDETLKRKSFDLLYKMTNQTNV), and 445 to 479 (PVCSKLIEQLVLSKDQNFKSELISQITNIAEKYSP). Disordered regions lie at residues 711-782 (TPLV…FPQQ), 801-920 (NNNS…NIDP), 933-973 (FSEN…INNN), and 996-1027 (TNNSNNNNNNNNNNNNNNNNNNNNNNNNNNNL). 5 stretches are compositionally biased toward low complexity: residues 762–782 (QQQQQQQQQQQQQQLQLFPQQ), 801–847 (NNNS…PNNQ), 878–911 (NKQTPPQNATPQQQQQQQQQQTQNTLSQQQIQKH), 936–952 (NNNRNENSNNTDNNQNN), and 962–972 (KKSNNENNINN).

Belongs to the adaptor complexes large subunit family. May be part of the adaptor protein complex 4 (AP-4), a heterotetramer composed of two large adaptins (epsilon-type subunitand beta-type subunit), a medium adaptin (mu-type subunit) and a small adaptin (sigma-type).

It is found in the golgi apparatus. It localises to the trans-Golgi network membrane. Probable component of an adaptor protein complex. Adaptor protein complexes are vesicle coat components involved both in vesicle formation and cargo selection. They control the vesicular transport of proteins in different trafficking pathways. The chain is AP-4 complex subunit epsilon from Dictyostelium discoideum (Social amoeba).